Reading from the N-terminus, the 182-residue chain is Oligoribonuclease (182 aa).

In terms of domain architecture, Exonuclease spans 8–171; it reads LIWIDLEMTG…DDIRESIKEL (164 aa). The active site involves Y129.

The protein belongs to the oligoribonuclease family.

The protein resides in the cytoplasm. In terms of biological role, 3'-to-5' exoribonuclease specific for small oligoribonucleotides. This is Oligoribonuclease from Haemophilus influenzae (strain PittGG).